The sequence spans 1057 residues: uncharacterized protein (1057 aa).

It belongs to the IIV-6 261R/396L/443R family.

This is an uncharacterized protein from Acheta domesticus (House cricket).